Here is a 303-residue protein sequence, read N- to C-terminus: THAP domain-containing protein 11 (303 aa).

Residues 6-64 (CCVPGCYNNSHRDKALHFYTFPKDAELRRLWLKNVSRAGVSGCFSTFQPTTGHRLCSVH) form a THAP-type zinc finger. Disordered stretches follow at residues 85–132 (VNER…AQTT) and 155–174 (SSQA…GEDV). Over residues 93–132 (RPAGAAAARRRQQQQQQQQQQQQQQQQQQPSPSASTAQTT) the composition is skewed to low complexity. Positions 232 to 235 (DHSY) match the HCFC1-binding motif (HBM) motif. Residues 244 to 294 (EELLRKLNEQRDILALMEVKMKEMKGSIRHLRLTEAKLREELREKDRLLAM) are a coiled coil.

It belongs to the THAP11 family. In terms of assembly, forms homodimers. Interacts via HBM with HCFC1. Forms a complex with HCFC1 and ZNF143.

It localises to the nucleus. It is found in the cytoplasm. Functionally, transcription factor, which has both transcriptional activation and repression activities. Also modulates chromatin accessibility. In complex with HCFC1 and ZNF143, regulates the expression of several genes, including AP2S1, ESCO2, OPHN1, RBL1, UBXN8 and ZNF32. May regulate the expression of genes that encode both cytoplasmic and mitochondrial ribosomal proteins. Required for normal mitochondrial development and function. Regulates mitochondrial gene expression, including that of components of the electron transport chain. Involved in the maintainance of pluripotency in early embryonic cells, possibly through its action on mitochondrial maturation which is required to meet high energy demands of these cells. Required for early development of retina, preventing premature exit of retinal progenitor cells from the cell cycle. This effect may also be mediated by its action on mitochondria. Through the regulation of MMACHC gene expression, controls cobalamin metabolism. Required for normal brain development and neural precursor differentiation. Involved in cell growth. In Bos taurus (Bovine), this protein is THAP domain-containing protein 11 (THAP11).